Here is a 209-residue protein sequence, read N- to C-terminus: Uracil phosphoribosyltransferase (209 aa).

5-phospho-alpha-D-ribose 1-diphosphate-binding positions include arginine 79, arginine 104, and 131–139 (DPMLATGGS). Uracil-binding positions include isoleucine 194 and 199-201 (GDA). Aspartate 200 is a 5-phospho-alpha-D-ribose 1-diphosphate binding site.

Belongs to the UPRTase family. Mg(2+) is required as a cofactor.

It catalyses the reaction UMP + diphosphate = 5-phospho-alpha-D-ribose 1-diphosphate + uracil. It participates in pyrimidine metabolism; UMP biosynthesis via salvage pathway; UMP from uracil: step 1/1. Its activity is regulated as follows. Allosterically activated by GTP. Its function is as follows. Catalyzes the conversion of uracil and 5-phospho-alpha-D-ribose 1-diphosphate (PRPP) to UMP and diphosphate. In Clostridium tetani (strain Massachusetts / E88), this protein is Uracil phosphoribosyltransferase.